The primary structure comprises 329 residues: Peroxidase 5 (329 aa).

An N-terminal signal peptide occupies residues 1–26 (MSSKRVTWLSLTWVLVFLCLSVELEA). Pyrrolidone carboxylic acid is present on Q27. Disulfide bonds link C37–C117, C70–C75, C123–C324, and C202–C234. The active-site Proton acceptor is the H68. D69, V72, G74, D76, and S78 together coordinate Ca(2+). P165 contributes to the substrate binding site. H195 contacts heme b. Residue T196 coordinates Ca(2+). N213 carries an N-linked (GlcNAc...) asparagine glycan. Ca(2+) contacts are provided by S251 and D256.

Belongs to the peroxidase family. Classical plant (class III) peroxidase subfamily. Heme b is required as a cofactor. It depends on Ca(2+) as a cofactor.

It localises to the secreted. It carries out the reaction 2 a phenolic donor + H2O2 = 2 a phenolic radical donor + 2 H2O. Functionally, removal of H(2)O(2), oxidation of toxic reductants, biosynthesis and degradation of lignin, suberization, auxin catabolism, response to environmental stresses such as wounding, pathogen attack and oxidative stress. These functions might be dependent on each isozyme/isoform in each plant tissue. The sequence is that of Peroxidase 5 from Vitis vinifera (Grape).